The following is a 556-amino-acid chain: Formate--tetrahydrofolate ligase (556 aa).

ATP is bound at residue 65-72 (TPAGEGKS).

This sequence belongs to the formate--tetrahydrofolate ligase family.

It catalyses the reaction (6S)-5,6,7,8-tetrahydrofolate + formate + ATP = (6R)-10-formyltetrahydrofolate + ADP + phosphate. It participates in one-carbon metabolism; tetrahydrofolate interconversion. This is Formate--tetrahydrofolate ligase from Clostridium perfringens (strain 13 / Type A).